Here is a 181-residue protein sequence, read N- to C-terminus: 3-hydroxyacyl-[acyl-carrier-protein] dehydratase FabZ (181 aa).

The active site involves His-54.

It belongs to the thioester dehydratase family. FabZ subfamily.

Its subcellular location is the cytoplasm. The enzyme catalyses a (3R)-hydroxyacyl-[ACP] = a (2E)-enoyl-[ACP] + H2O. In terms of biological role, involved in unsaturated fatty acids biosynthesis. Catalyzes the dehydration of short chain beta-hydroxyacyl-ACPs and long chain saturated and unsaturated beta-hydroxyacyl-ACPs. This Yersinia pestis protein is 3-hydroxyacyl-[acyl-carrier-protein] dehydratase FabZ.